Consider the following 361-residue polypeptide: Mitogen-activated protein kinase 14B (361 aa).

The Protein kinase domain occupies 25–309 (YQNLSPVGSG…ASQALAHPYF (285 aa)). ATP-binding positions include 31–39 (VGSGAYGSV) and K54. D151 (proton acceptor) is an active-site residue. T181 carries the phosphothreonine; by MAP2K6 modification. The TXY signature appears at 181 to 183 (TGY). The residue at position 183 (Y183) is a Phosphotyrosine; by MAP2K6.

It belongs to the protein kinase superfamily. CMGC Ser/Thr protein kinase family. MAP kinase subfamily. Mg(2+) is required as a cofactor. Post-translationally, dually phosphorylated on Thr-181 and Tyr-183, which activates the enzyme. Predominantly expressed in the ovary. Lower levels present in brain, gill, heart, spleen, kidney, muscle and gut.

The protein localises to the cytoplasm. It localises to the nucleus. The enzyme catalyses L-seryl-[protein] + ATP = O-phospho-L-seryl-[protein] + ADP + H(+). It catalyses the reaction L-threonyl-[protein] + ATP = O-phospho-L-threonyl-[protein] + ADP + H(+). Its activity is regulated as follows. Activated by threonine and tyrosine phosphorylation by the dual specificity kinase, MKK6. Its function is as follows. Serine/threonine kinase which acts as an essential component of the MAP kinase signal transduction pathway. Mapk14b is one of the four p38 MAPKs which play an important role in the cascades of cellular responses evoked by extracellular stimuli such as pro-inflammatory cytokines or physical stress leading to direct activation of transcription factors. Accordingly, p38 MAPKs phosphorylate a broad range of proteins and it has been estimated that they may have approximately 200 to 300 substrates each. Some of the targets are downstream kinases which are activated through phosphorylation and further phosphorylate additional targets. This Cyprinus carpio (Common carp) protein is Mitogen-activated protein kinase 14B (mapk14b).